Consider the following 1948-residue polypeptide: Receptor-type tyrosine-protein phosphatase S (1948 aa).

The N-terminal stretch at 1-29 (MAPTWGPGMVSVVGPMGLLVVLLVGGCAA) is a signal peptide. Residues 30 to 1282 (EEPPRFIKEP…PQPIVDGEEG (1253 aa)) are Extracellular-facing. Ig-like C2-type domains lie at 33-123 (PRFI…AKLT), 135-233 (PNID…ANLY), and 245-327 (PRFS…AQIT). 2 disulfide bridges follow: Cys-54/Cys-107 and Cys-156/Cys-216. The segment at 68-72 (KKGKK) is important for binding to glycosaminoglycan chains. N-linked (GlcNAc...) asparagine glycans are attached at residues Asn-263 and Asn-308. Cys-266 and Cys-311 form a disulfide bridge. Fibronectin type-III domains lie at 334–424 (APGT…TGEQ), 429–523 (APRN…TQQG), 527–616 (QPMN…TLQS), 621–718 (PPQD…TDED), 723–831 (PPRK…TKGA), 832–930 (VLGR…TPRG), 931–1033 (HPQI…FLRD), and 1036–1120 (SPKN…TAFN). The segment at 700-724 (TEVGPGPESSPVVVRTDEDVPSAPP) is disordered. Low complexity predominate over residues 701–713 (EVGPGPESSPVVV). Asn-733 carries an N-linked (GlcNAc...) asparagine glycan. N-linked (GlcNAc...) asparagine glycosylation occurs at Asn-940. The helical transmembrane segment at 1283 to 1303 (LIWVIGPVLAVVFIICIVIAI) threads the bilayer. The Cytoplasmic portion of the chain corresponds to 1304-1948 (LLYKNKPDSK…YLGSFDHYAT (645 aa)). Basic and acidic residues-rich tracts occupy residues 1311–1321 (DSKRKDSEPRT) and 1331–1340 (APHHPKDPVE). Positions 1311-1340 (DSKRKDSEPRTKCLLNNADLAPHHPKDPVE) are disordered. Tyrosine-protein phosphatase domains lie at 1393 to 1648 (LSQE…LLEA) and 1680 to 1939 (MELE…ALEY). Residues Asp-1557, 1589–1595 (CSAGVGR), and Gln-1633 contribute to the substrate site. Cys-1589 functions as the Phosphocysteine intermediate in the catalytic mechanism. Cys-1880 serves as the catalytic Phosphocysteine intermediate.

It belongs to the protein-tyrosine phosphatase family. Receptor class 2A subfamily. Binding to large heparan sulfate proteoglycan structures promotes oligomerization. Binding to chondroitin sulfate proteoglycan does not lead to oligomerization. Interacts (via Ig-like domains) with NTRK3. Interacts (via Ig-like domains) with NTRK1, but does not form detectable complexes with NTRK2. Interacts with PPFIA1, PPFIA2 and PPFIA3. Post-translationally, a cleavage occurs, separating the extracellular domain from the transmembrane segment. This process called 'ectodomain shedding' is thought to be involved in receptor desensitization, signal transduction and/or membrane localization. Detected in peripheral blood plasmacytoid dendritic cells (at protein level). Detected in all tissues tested except for placenta and liver. Detected in peripheral blood plasmacytoid dendritic cells.

The protein localises to the cell membrane. Its subcellular location is the cell projection. The protein resides in the axon. It is found in the perikaryon. It localises to the cytoplasmic vesicle. The protein localises to the secretory vesicle. Its subcellular location is the synaptic vesicle membrane. The protein resides in the synapse. It is found in the synaptosome. It localises to the postsynaptic density. The protein localises to the neuron projection. Its subcellular location is the growth cone. The enzyme catalyses O-phospho-L-tyrosyl-[protein] + H2O = L-tyrosyl-[protein] + phosphate. Functionally, cell surface receptor that binds to glycosaminoglycans, including chondroitin sulfate proteoglycans and heparan sulfate proteoglycan. Binding to chondroitin sulfate and heparan sulfate proteoglycans has opposite effects on PTPRS oligomerization and regulation of neurite outgrowth. Contributes to the inhibition of neurite and axonal outgrowth by chondroitin sulfate proteoglycans, also after nerve transection. Plays a role in stimulating neurite outgrowth in response to the heparan sulfate proteoglycan GPC2. Required for normal brain development, especially for normal development of the pituitary gland and the olfactory bulb. Functions as a tyrosine phosphatase. Mediates dephosphorylation of NTRK1, NTRK2 and NTRK3. Plays a role in down-regulation of signaling cascades that lead to the activation of Akt and MAP kinases. Down-regulates TLR9-mediated activation of NF-kappa-B, as well as production of TNF, interferon alpha and interferon beta. In Homo sapiens (Human), this protein is Receptor-type tyrosine-protein phosphatase S (PTPRS).